Reading from the N-terminus, the 407-residue chain is Phosphopentomutase (407 aa).

Mn(2+)-binding residues include Asp-10, Asp-306, His-311, Asp-347, His-348, and His-359.

The protein belongs to the phosphopentomutase family. Mn(2+) is required as a cofactor.

The protein resides in the cytoplasm. The enzyme catalyses 2-deoxy-alpha-D-ribose 1-phosphate = 2-deoxy-D-ribose 5-phosphate. The catalysed reaction is alpha-D-ribose 1-phosphate = D-ribose 5-phosphate. The protein operates within carbohydrate degradation; 2-deoxy-D-ribose 1-phosphate degradation; D-glyceraldehyde 3-phosphate and acetaldehyde from 2-deoxy-alpha-D-ribose 1-phosphate: step 1/2. In terms of biological role, isomerase that catalyzes the conversion of deoxy-ribose 1-phosphate (dRib-1-P) and ribose 1-phosphate (Rib-1-P) to deoxy-ribose 5-phosphate (dRib-5-P) and ribose 5-phosphate (Rib-5-P), respectively. This is Phosphopentomutase from Photorhabdus laumondii subsp. laumondii (strain DSM 15139 / CIP 105565 / TT01) (Photorhabdus luminescens subsp. laumondii).